The primary structure comprises 82 residues: Small ribosomal subunit protein bS16 (82 aa).

Belongs to the bacterial ribosomal protein bS16 family.

In Dehalococcoides mccartyi (strain ATCC BAA-2100 / JCM 16839 / KCTC 5957 / BAV1), this protein is Small ribosomal subunit protein bS16.